A 216-amino-acid chain; its full sequence is Small ribosomal subunit protein uS3c (216 aa).

The 76-residue stretch at 43–118 (IKNYIQKNIR…KLNIAIVKIT (76 aa)) folds into the KH type-2 domain.

Belongs to the universal ribosomal protein uS3 family. Part of the 30S ribosomal subunit.

It localises to the plastid. It is found in the chloroplast. This Phaseolus vulgaris (Kidney bean) protein is Small ribosomal subunit protein uS3c (rps3).